We begin with the raw amino-acid sequence, 104 residues long: Chitin-binding protein 2 (104 aa).

As to quaternary structure, oligomer in an unreduced state. Post-translationally, glycosylated.

Its function is as follows. Chitin-binding protein. Has antifungal activity against C.krusei, C.albicans, C.tropicalis and C.parapsilosis. Inhibits C.albicans by increasing cell membrane permeability and production of reactive oxygen species. Has no hemagglutinating activity. The protein is Chitin-binding protein 2 of Moringa oleifera (Horseradish tree).